A 245-amino-acid polypeptide reads, in one-letter code: 1-(5-phosphoribosyl)-5-[(5-phosphoribosylamino)methylideneamino] imidazole-4-carboxamide isomerase (245 aa).

D8 acts as the Proton acceptor in catalysis. D129 (proton donor) is an active-site residue.

The protein belongs to the HisA/HisF family.

The protein localises to the cytoplasm. The enzyme catalyses 1-(5-phospho-beta-D-ribosyl)-5-[(5-phospho-beta-D-ribosylamino)methylideneamino]imidazole-4-carboxamide = 5-[(5-phospho-1-deoxy-D-ribulos-1-ylimino)methylamino]-1-(5-phospho-beta-D-ribosyl)imidazole-4-carboxamide. It participates in amino-acid biosynthesis; L-histidine biosynthesis; L-histidine from 5-phospho-alpha-D-ribose 1-diphosphate: step 4/9. In Rhodopseudomonas palustris (strain BisB5), this protein is 1-(5-phosphoribosyl)-5-[(5-phosphoribosylamino)methylideneamino] imidazole-4-carboxamide isomerase.